We begin with the raw amino-acid sequence, 409 residues long: Arginine deiminase (409 aa).

C399 (amidino-cysteine intermediate) is an active-site residue.

This sequence belongs to the arginine deiminase family.

It localises to the cytoplasm. The catalysed reaction is L-arginine + H2O = L-citrulline + NH4(+). It functions in the pathway amino-acid degradation; L-arginine degradation via ADI pathway; carbamoyl phosphate from L-arginine: step 1/2. The sequence is that of Arginine deiminase from Borreliella afzelii (strain PKo) (Borrelia afzelii).